Here is a 985-residue protein sequence, read N- to C-terminus: Exocyst complex component 4 (985 aa).

A coiled-coil region spans residues 36 to 70; the sequence is SETTEERQKEKQKIEAEFKRSDLRLNELVSRHDQQ. 5 positions are modified to phosphoserine: Ser235, Ser456, Ser459, Ser682, and Ser686. Residues 434–480 form a disordered region; the sequence is DKSSHVGTSNNSDAFKEHRRNASDASVDDNLAGQLGGSGKGSTSGLF.

The protein belongs to the SEC8 family. As to quaternary structure, the exocyst complex is composed of Sec3/Exoc1, Sec5/Exoc2, Sec6/Exoc3, Sec8/Exoc4, Sec10/Exoc5, Sec15/Exoc6, exo70/Exoc7 and Exo84/Exoc8. Abundant in the embryonic and larval glutamatergic neuromuscular junctions (NMJs), pre and postsynaptically.

Its function is as follows. Component of the exocyst complex involved in the docking of exocytic vesicles with fusion sites on the plasma membrane. Involved in regulation of synaptic microtubule formation, and also regulation of synaptic growth and glutamate receptor trafficking. Does not appear to be required for basal neurotransmission. This is Exocyst complex component 4 from Drosophila melanogaster (Fruit fly).